Reading from the N-terminus, the 178-residue chain is Ribosome maturation factor RimP (178 aa).

The protein belongs to the RimP family.

The protein resides in the cytoplasm. Its function is as follows. Required for maturation of 30S ribosomal subunits. In Mycolicibacterium paratuberculosis (strain ATCC BAA-968 / K-10) (Mycobacterium paratuberculosis), this protein is Ribosome maturation factor RimP.